A 214-amino-acid chain; its full sequence is N-(5'-phosphoribosyl)anthranilate isomerase (214 aa).

Belongs to the TrpF family.

The enzyme catalyses N-(5-phospho-beta-D-ribosyl)anthranilate = 1-(2-carboxyphenylamino)-1-deoxy-D-ribulose 5-phosphate. Its pathway is amino-acid biosynthesis; L-tryptophan biosynthesis; L-tryptophan from chorismate: step 3/5. This chain is N-(5'-phosphoribosyl)anthranilate isomerase, found in Halorubrum lacusprofundi (strain ATCC 49239 / DSM 5036 / JCM 8891 / ACAM 34).